Reading from the N-terminus, the 458-residue chain is Argininosuccinate lyase (458 aa).

Belongs to the lyase 1 family. Argininosuccinate lyase subfamily.

It localises to the cytoplasm. The catalysed reaction is 2-(N(omega)-L-arginino)succinate = fumarate + L-arginine. Its pathway is amino-acid biosynthesis; L-arginine biosynthesis; L-arginine from L-ornithine and carbamoyl phosphate: step 3/3. The protein is Argininosuccinate lyase of Geobacter sp. (strain M21).